Here is a 528-residue protein sequence, read N- to C-terminus: Neuronal acetylcholine receptor subunit alpha-2 (528 aa).

Residues 1–23 (MGWPCRSIIPLLVWCFVTLQAAT) form the signal peptide. At 24–239 (REQKQPHGFA…ITFYFVIRRL (216 aa)) the chain is on the extracellular side. N-linked (GlcNAc...) asparagine glycosylation is found at Asn-54 and Asn-104. 2 disulfide bridges follow: Cys-158–Cys-172 and Cys-222–Cys-223. Helical transmembrane passes span 240-264 (PLFY…VFYL), 272-290 (ITLC…LLIT), and 306-327 (YLLF…VLNV). Over 328–501 (HHRSPSTHTM…WKYVAMVIDR (174 aa)) the chain is Cytoplasmic. Residues 390–410 (DDKWEEEEEEEEEEEEEEEEE) show a composition bias toward acidic residues. A disordered region spans residues 390 to 427 (DDKWEEEEEEEEEEEEEEEEEKAYPSRVPSGGSQGTQC). A helical transmembrane segment spans residues 502-520 (IFLWMFIIVCLLGTVGLFL).

This sequence belongs to the ligand-gated ion channel (TC 1.A.9) family. Acetylcholine receptor (TC 1.A.9.1) subfamily. Alpha-2/CHRNA2 sub-subfamily. In terms of assembly, neuronal AChR is composed of two different types of subunits: alpha and non-alpha (beta). CHRNA2/alpha-2 subunit can be combined to CHRNB2/beta-2 or CHRNB4/beta-4 to give rise to functional receptors. Both CHRNA2:CHRNB2 and CHRNA2:CHRNB4 nAChR complexes are heteropentamers with two subtypes: LS (low agonist sensitivity) with a (CHRNA2)3:(CHRNB2/4)2 and HS (high agonist sensitivity) with a (CHRNA2)2:(CHRNB2/4)3 stoichiometries; the subtypes differ in their subunit binding interfaces which are involved in ligand binding.

The protein resides in the synaptic cell membrane. The protein localises to the cell membrane. It carries out the reaction Ca(2+)(in) = Ca(2+)(out). It catalyses the reaction K(+)(in) = K(+)(out). The enzyme catalyses Na(+)(in) = Na(+)(out). Its function is as follows. Component of neuronal acetylcholine receptors (nAChRs) that function as pentameric, ligand-gated cation channels with high calcium permeability among other activities. nAChRs are excitatory neurotrasnmitter receptors formed by a collection of nAChR subunits known to mediate synaptic transmission in the nervous system and the neuromuscular junction. Each nAchR subunit confers differential attributes to channel properties, including activation, deactivation and desensitization kinetics, pH sensitivity, cation permeability, and binding to allosteric modulators. CHRNA2 forms heteropentameric neuronal acetylcholine receptors with CHRNB2 and CHRNB4 and plays a role in nicotine dependence. This is Neuronal acetylcholine receptor subunit alpha-2 (CHRNA2) from Gallus gallus (Chicken).